Here is a 748-residue protein sequence, read N- to C-terminus: Elongation factor G, mitochondrial (748 aa).

Residues 1–14 (MTISSFLRVRHSLA) constitute a mitochondrion transit peptide. The tr-type G domain occupies 40–318 (ERIRNIGISA…VLNYLPHPGE (279 aa)). Residues 49–56 (AHIDSGKT), 116–120 (DTPGH), and 170–173 (NKLD) contribute to the GTP site.

Belongs to the TRAFAC class translation factor GTPase superfamily. Classic translation factor GTPase family. EF-G/EF-2 subfamily.

It localises to the mitochondrion. It functions in the pathway protein biosynthesis; polypeptide chain elongation. In terms of biological role, mitochondrial GTPase that catalyzes the GTP-dependent ribosomal translocation step during translation elongation. During this step, the ribosome changes from the pre-translocational (PRE) to the post-translocational (POST) state as the newly formed A-site-bound peptidyl-tRNA and P-site-bound deacylated tRNA move to the P and E sites, respectively. Catalyzes the coordinated movement of the two tRNA molecules, the mRNA and conformational changes in the ribosome. The sequence is that of Elongation factor G, mitochondrial from Aedes aegypti (Yellowfever mosquito).